The primary structure comprises 271 residues: Cyclase-like protein 3 (271 aa).

The N-terminal stretch at 1–21 (MYHLLIIITTLSFSSINITFA) is a signal peptide.

It belongs to the Cyclase 1 superfamily.

The protein localises to the secreted. It localises to the extracellular space. The protein resides in the extracellular matrix. The polypeptide is Cyclase-like protein 3 (Arabidopsis thaliana (Mouse-ear cress)).